The primary structure comprises 206 residues: uncharacterized protein (206 aa).

Positions 128-206 (KRYNVQKPKV…DQSWLDELLR (79 aa)) are disordered. Residues 171–181 (YISSNHSSMHI) show a composition bias toward polar residues.

Its subcellular location is the cytoplasm. The protein localises to the nucleus. This is an uncharacterized protein from Schizosaccharomyces pombe (strain 972 / ATCC 24843) (Fission yeast).